Reading from the N-terminus, the 160-residue chain is Transcription elongation factor GreA (160 aa).

A coiled-coil region spans residues 49-75 (SEYDEAKNDQAFTEGKILQLENKLKNA).

The protein belongs to the GreA/GreB family.

Its function is as follows. Necessary for efficient RNA polymerase transcription elongation past template-encoded arresting sites. The arresting sites in DNA have the property of trapping a certain fraction of elongating RNA polymerases that pass through, resulting in locked ternary complexes. Cleavage of the nascent transcript by cleavage factors such as GreA or GreB allows the resumption of elongation from the new 3'terminus. GreA releases sequences of 2 to 3 nucleotides. The protein is Transcription elongation factor GreA of Clostridium botulinum (strain Alaska E43 / Type E3).